The chain runs to 372 residues: tRNA 2-selenouridine synthase (372 aa).

Positions 19 to 142 constitute a Rhodanese domain; the sequence is LASGHPIMDV…MRQYLIDTID (124 aa). Cysteine 102 serves as the catalytic S-selanylcysteine intermediate.

Belongs to the SelU family. Monomer.

The enzyme catalyses 5-methylaminomethyl-2-thiouridine(34) in tRNA + selenophosphate + (2E)-geranyl diphosphate + H2O + H(+) = 5-methylaminomethyl-2-selenouridine(34) in tRNA + (2E)-thiogeraniol + phosphate + diphosphate. The catalysed reaction is 5-methylaminomethyl-2-thiouridine(34) in tRNA + (2E)-geranyl diphosphate = 5-methylaminomethyl-S-(2E)-geranyl-thiouridine(34) in tRNA + diphosphate. It carries out the reaction 5-methylaminomethyl-S-(2E)-geranyl-thiouridine(34) in tRNA + selenophosphate + H(+) = 5-methylaminomethyl-2-(Se-phospho)selenouridine(34) in tRNA + (2E)-thiogeraniol. It catalyses the reaction 5-methylaminomethyl-2-(Se-phospho)selenouridine(34) in tRNA + H2O = 5-methylaminomethyl-2-selenouridine(34) in tRNA + phosphate. In terms of biological role, involved in the post-transcriptional modification of the uridine at the wobble position (U34) of tRNA(Lys), tRNA(Glu) and tRNA(Gln). Catalyzes the conversion of 2-thiouridine (S2U-RNA) to 2-selenouridine (Se2U-RNA). Acts in a two-step process involving geranylation of 2-thiouridine (S2U) to S-geranyl-2-thiouridine (geS2U) and subsequent selenation of the latter derivative to 2-selenouridine (Se2U) in the tRNA chain. The protein is tRNA 2-selenouridine synthase of Shewanella loihica (strain ATCC BAA-1088 / PV-4).